Here is a 314-residue protein sequence, read N- to C-terminus: GDP-L-fucose synthase (314 aa).

Residues 15 to 21 and 109 to 112 contribute to the NADP(+) site; these read GHKGMVG and LGSS. Tyr140 acts as the Proton donor/acceptor in catalysis. Residues Lys144, 167-170, and His183 each bind NADP(+); that span reads PTNL. The substrate site is built by Lys191, Trp206, Arg213, and Asp273.

Belongs to the NAD(P)-dependent epimerase/dehydratase family. Fucose synthase subfamily.

It catalyses the reaction GDP-beta-L-fucose + NADP(+) = GDP-4-dehydro-alpha-D-rhamnose + NADPH + H(+). The protein operates within nucleotide-sugar biosynthesis; GDP-L-fucose biosynthesis via de novo pathway; GDP-L-fucose from GDP-alpha-D-mannose: step 2/2. Functionally, catalyzes the two-step NADP-dependent conversion of GDP-4-dehydro-6-deoxy-D-mannose to GDP-fucose, involving an epimerase and a reductase reaction. This Sinorhizobium fredii (strain NBRC 101917 / NGR234) protein is GDP-L-fucose synthase.